The chain runs to 251 residues: Mediator of RNA polymerase II transcription subunit 7 (251 aa).

The interval 1 to 38 is disordered; it reads MLPGFGAQTVSPFPNPPEYASAYTSDRINNGSAPPPPH. A compositionally biased stretch (polar residues) spans 22-32; that stretch reads AYTSDRINNGS.

It belongs to the Mediator complex subunit 7 family. As to quaternary structure, component of the Mediator complex. Interacts with mdt-10 and mdt-21. Interacts with RNA polymerase II.

It is found in the nucleus. Functionally, component of the Mediator complex, a coactivator involved in the regulated transcription of nearly all RNA polymerase II-dependent genes. Mediator functions as a bridge to convey information from gene-specific regulatory proteins to the basal RNA polymerase II transcription machinery. Mediator is recruited to promoters by direct interactions with regulatory proteins and serves as a scaffold for the assembly of a functional preinitiation complex with RNA polymerase II and the general transcription factors. Required for germ cell development and gonadal growth. This is Mediator of RNA polymerase II transcription subunit 7 (let-49) from Caenorhabditis elegans.